Here is a 542-residue protein sequence, read N- to C-terminus: Probable cysteine proteinase 361L (542 aa).

Residues C172, H382, and N414 contribute to the active site. Residues 520–540 (TNNWYIYALIIIFILIIFFVL) traverse the membrane as a helical segment.

It belongs to the peptidase C1 family.

The protein localises to the membrane. Its function is as follows. Probable cysteine protease. In Acheta domesticus (House cricket), this protein is Probable cysteine proteinase 361L.